A 228-amino-acid polypeptide reads, in one-letter code: UPF0758 protein CKR_0778 (228 aa).

An MPN domain is found at 106-228; sequence RICSPQDAAV…FISLKEKGIL (123 aa). Zn(2+)-binding residues include H177, H179, and D190. The JAMM motif motif lies at 177–190; sequence HNHPSGDPSPSNED.

This sequence belongs to the UPF0758 family.

The sequence is that of UPF0758 protein CKR_0778 from Clostridium kluyveri (strain NBRC 12016).